The sequence spans 173 residues: Crossover junction endodeoxyribonuclease RuvC (173 aa).

Catalysis depends on residues aspartate 8, glutamate 67, and aspartate 139. Mg(2+)-binding residues include aspartate 8, glutamate 67, and aspartate 139.

It belongs to the RuvC family. In terms of assembly, homodimer which binds Holliday junction (HJ) DNA. The HJ becomes 2-fold symmetrical on binding to RuvC with unstacked arms; it has a different conformation from HJ DNA in complex with RuvA. In the full resolvosome a probable DNA-RuvA(4)-RuvB(12)-RuvC(2) complex forms which resolves the HJ. Mg(2+) is required as a cofactor.

Its subcellular location is the cytoplasm. The catalysed reaction is Endonucleolytic cleavage at a junction such as a reciprocal single-stranded crossover between two homologous DNA duplexes (Holliday junction).. In terms of biological role, the RuvA-RuvB-RuvC complex processes Holliday junction (HJ) DNA during genetic recombination and DNA repair. Endonuclease that resolves HJ intermediates. Cleaves cruciform DNA by making single-stranded nicks across the HJ at symmetrical positions within the homologous arms, yielding a 5'-phosphate and a 3'-hydroxyl group; requires a central core of homology in the junction. The consensus cleavage sequence is 5'-(A/T)TT(C/G)-3'. Cleavage occurs on the 3'-side of the TT dinucleotide at the point of strand exchange. HJ branch migration catalyzed by RuvA-RuvB allows RuvC to scan DNA until it finds its consensus sequence, where it cleaves and resolves the cruciform DNA. The protein is Crossover junction endodeoxyribonuclease RuvC of Baumannia cicadellinicola subsp. Homalodisca coagulata.